The primary structure comprises 253 residues: Phosphoglycerate mutase 2 (253 aa).

Thr3 bears the Phosphothreonine mark. Substrate-binding positions include 10 to 17 (RHGESTWN), 23 to 24 (CG), Arg62, 89 to 92 (ERHY), Lys100, and 116 to 117 (RR). Catalysis depends on His11, which acts as the Tele-phosphohistidine intermediate. Phosphoserine is present on Ser14. Glu89 serves as the catalytic Proton donor/acceptor. Ser118 bears the Phosphoserine mark. Residues Tyr132 and Tyr133 each carry the phosphotyrosine modification. Phosphoserine is present on Ser135. Position 152 is a phosphothreonine (Thr152). A substrate-binding site is contributed by 187–188 (GN).

Belongs to the phosphoglycerate mutase family. BPG-dependent PGAM subfamily. In terms of assembly, homodimer. Interacts with ENO1. As to expression, expressed in the heart and muscle. Not found in the liver and brain.

It catalyses the reaction (2R)-2-phosphoglycerate = (2R)-3-phosphoglycerate. The enzyme catalyses (2R)-3-phospho-glyceroyl phosphate = (2R)-2,3-bisphosphoglycerate + H(+). Its function is as follows. Interconversion of 3- and 2-phosphoglycerate with 2,3-bisphosphoglycerate as the primer of the reaction. Can also catalyze the reaction of EC 5.4.2.4 (synthase), but with a reduced activity. The polypeptide is Phosphoglycerate mutase 2 (PGAM2) (Homo sapiens (Human)).